Here is a 105-residue protein sequence, read N- to C-terminus: Biogenesis of lysosome-related organelles complex 1 subunit SNN1 (105 aa).

Positions 70-105 (WKDDNERLDSLRKRVDSLKSRFQSLKLRSDKLEQRE) form a coiled coil.

Belongs to the SNAPIN family. In terms of assembly, component of the biogenesis of lysosome-related organelles complex-1 (BLOC-1).

Its subcellular location is the endosome. Its function is as follows. Component of the biogenesis of lysosome-related organelles complex-1 (BLOC-1), a complex involved in endosomal cargo sorting. The chain is Biogenesis of lysosome-related organelles complex 1 subunit SNN1 (SNN1) from Zygosaccharomyces rouxii (strain ATCC 2623 / CBS 732 / NBRC 1130 / NCYC 568 / NRRL Y-229).